Consider the following 775-residue polypeptide: Kinesin-like protein KIF3B (775 aa).

The region spanning 9–341 (SVKVVVRCRP…LRYANRAKNI (333 aa)) is the Kinesin motor domain. An ATP-binding site is contributed by 97–104 (GQTGTGKT). Positions 372–419 (KRSGRKRRRRRRRRVGEGGEEFEDGEDEEDDDDDDEDEEEGVDADKNI) are disordered. Residues 374–385 (SGRKRRRRRRRR) show a composition bias toward basic residues. Acidic residues predominate over residues 389 to 413 (GGEEFEDGEDEEDDDDDDEDEEEGV). A coiled-coil region spans residues 501–591 (LELKRQEIAE…QNELTRELKL (91 aa)). Positions 716 to 775 (FHASLGSSPGLSASAAGFSKKPKSGRPKTGKKVSTPTSAHSPLSGSGSPLYPQSRGLVPK) are disordered. Positions 718–734 (ASLGSSPGLSASAAGFS) are enriched in low complexity. Positions 735 to 746 (KKPKSGRPKTGK) are enriched in basic residues. Low complexity predominate over residues 756 to 765 (SPLSGSGSPL).

It belongs to the TRAFAC class myosin-kinesin ATPase superfamily. Kinesin family. In terms of assembly, heterodimer of KIF3A and KIF3B. KIF3A/KIF3B heterodimer interacts with KIFAP3 forming a heterotrimeric (KIF3A/KIF3B/KIFAP3) complex.

The protein resides in the cytoplasm. It is found in the cytoskeleton. The protein localises to the cell projection. Its subcellular location is the cilium. It localises to the dendritic spine. Its function is as follows. Microtubule-based molecular motor that transport intracellular cargos, such as vesicles, organelles and protein complexes. Uses ATP hydrolysis to generate force to bind and move along the microtubule. Plays a role in cilia formation. Required for photoreceptor development. This is Kinesin-like protein KIF3B from Danio rerio (Zebrafish).